Reading from the N-terminus, the 149-residue chain is Cytochrome c-type biogenesis protein CcmE (149 aa).

Residues 1-7 lie on the Cytoplasmic side of the membrane; sequence MKKRHQR. The helical; Signal-anchor for type II membrane protein transmembrane segment at 8 to 28 threads the bilayer; the sequence is LFLVLGVVAGVSVATALVLNA. Residues 29–149 are Periplasmic-facing; sequence FRDNMTFFIT…EHSVDEVGDY (121 aa). H123 and Y127 together coordinate heme.

Belongs to the CcmE/CycJ family.

It localises to the cell inner membrane. Functionally, heme chaperone required for the biogenesis of c-type cytochromes. Transiently binds heme delivered by CcmC and transfers the heme to apo-cytochromes in a process facilitated by CcmF and CcmH. In Halorhodospira halophila (strain DSM 244 / SL1) (Ectothiorhodospira halophila (strain DSM 244 / SL1)), this protein is Cytochrome c-type biogenesis protein CcmE.